Reading from the N-terminus, the 61-residue chain is Large ribosomal subunit protein uL30 (61 aa).

Belongs to the universal ribosomal protein uL30 family. As to quaternary structure, part of the 50S ribosomal subunit.

The protein is Large ribosomal subunit protein uL30 of Nitrosomonas europaea (strain ATCC 19718 / CIP 103999 / KCTC 2705 / NBRC 14298).